The following is a 479-amino-acid chain: Ribosomal RNA small subunit methyltransferase F (479 aa).

S-adenosyl-L-methionine is bound by residues 125–131 (AAAPGSK), Glu-149, Asp-176, and Asp-194. The active-site Nucleophile is Cys-247.

The protein belongs to the class I-like SAM-binding methyltransferase superfamily. RsmB/NOP family.

The protein localises to the cytoplasm. The catalysed reaction is cytidine(1407) in 16S rRNA + S-adenosyl-L-methionine = 5-methylcytidine(1407) in 16S rRNA + S-adenosyl-L-homocysteine + H(+). Functionally, specifically methylates the cytosine at position 1407 (m5C1407) of 16S rRNA. The polypeptide is Ribosomal RNA small subunit methyltransferase F (Salmonella schwarzengrund (strain CVM19633)).